The chain runs to 368 residues: Quinolinate synthase (368 aa).

Residues histidine 46 and serine 63 each coordinate iminosuccinate. Cysteine 110 serves as a coordination point for [4Fe-4S] cluster. Iminosuccinate is bound by residues 141-143 (YVN) and serine 162. Cysteine 230 is a [4Fe-4S] cluster binding site. Iminosuccinate-binding positions include 256-258 (HPE) and threonine 273. Cysteine 320 provides a ligand contact to [4Fe-4S] cluster.

It belongs to the quinolinate synthase family. Type 3 subfamily. Requires [4Fe-4S] cluster as cofactor.

It localises to the cytoplasm. The enzyme catalyses iminosuccinate + dihydroxyacetone phosphate = quinolinate + phosphate + 2 H2O + H(+). Its pathway is cofactor biosynthesis; NAD(+) biosynthesis; quinolinate from iminoaspartate: step 1/1. In terms of biological role, catalyzes the condensation of iminoaspartate with dihydroxyacetone phosphate to form quinolinate. This chain is Quinolinate synthase, found in Bacillus cereus (strain G9842).